We begin with the raw amino-acid sequence, 476 residues long: Xylan O-acetyltransferase 4 (476 aa).

The disordered stretch occupies residues 1-37; that stretch reads MTKPQQQSPPSTTATTTTSPPPPPPSTPPPASSSSSS. Residues 1-63 lie on the Cytoplasmic side of the membrane; the sequence is MTKPQQQSPP…SLLSALRRSP (63 aa). Over residues 8–18 the composition is skewed to low complexity; it reads SPPSTTATTTT. The segment covering 19–31 has biased composition (pro residues); the sequence is SPPPPPPSTPPPA. The chain crosses the membrane as a helical; Signal-anchor for type II membrane protein span at residues 64–80; sequence VTTLVAAFFLLALFMYG. Residues 81-476 lie on the Lumenal side of the membrane; it reads EDVRTLAELS…PSPHPPLPPQ (396 aa). 3 N-linked (GlcNAc...) asparagine glycosylation sites follow: N103, N128, and N167. 4 disulfides stabilise this stretch: C117–C168, C139–C204, C148–C444, and C360–C440. The short motif at 191-193 is the GDS motif element; the sequence is GDS. S193 functions as the Nucleophile in the catalytic mechanism. Residues N299 and N369 are each glycosylated (N-linked (GlcNAc...) asparagine). The active-site Proton donor is D439. The DXXH motif signature appears at 439-442; sequence DCIH. Catalysis depends on H442, which acts as the Proton acceptor.

The protein belongs to the PC-esterase family. TBL subfamily. In terms of tissue distribution, highly expressed in leaves. Expressed in roots, stems and inflorescences.

It localises to the golgi apparatus membrane. Functionally, xylan acetyltransferase required for 2-O- and 3-O-monoacetylation of xylosyl residues in xylan. Catalyzes the 2-O-acetylation of xylan, followed by nonenzymatic acetyl migration to the O-3 position, resulting in products that are monoacetylated at both O-2 and O-3 positions. The protein is Xylan O-acetyltransferase 4 of Oryza sativa subsp. japonica (Rice).